The sequence spans 506 residues: Maturase K (506 aa).

This sequence belongs to the intron maturase 2 family. MatK subfamily.

The protein localises to the plastid. The protein resides in the chloroplast. Its function is as follows. Usually encoded in the trnK tRNA gene intron. Probably assists in splicing its own and other chloroplast group II introns. In Uncarina grandidieri (Mouse trap tree), this protein is Maturase K.